Here is a 188-residue protein sequence, read N- to C-terminus: ADP-ribosylation factor K (188 aa).

GTP-binding positions include 34–40 (DGAGKST), 75–79 (DVGGQ), and 134–137 (NKQD).

Belongs to the small GTPase superfamily. Arf family.

It is found in the golgi apparatus. GTP-binding protein that may be involved in protein trafficking. May modulate vesicle budding and uncoating within the Golgi apparatus. The polypeptide is ADP-ribosylation factor K (arrK) (Dictyostelium discoideum (Social amoeba)).